Reading from the N-terminus, the 329-residue chain is L-threonine dehydratase catabolic TdcB (329 aa).

53–54 serves as a coordination point for AMP; the sequence is RT. Lys-58 is modified (N6-(pyridoxal phosphate)lysine). AMP contacts are provided by residues Gln-88, 119 to 120, and Asn-314; that span reads DY.

It belongs to the serine/threonine dehydratase family. In the native structure, TdcB is in a dimeric form, whereas in the TdcB-AMP complex, it exists in a tetrameric form (dimer of dimers). Pyridoxal 5'-phosphate is required as a cofactor.

The catalysed reaction is L-threonine = 2-oxobutanoate + NH4(+). It carries out the reaction L-serine = pyruvate + NH4(+). The protein operates within amino-acid degradation; L-threonine degradation via propanoate pathway; propanoate from L-threonine: step 1/4. Its activity is regulated as follows. Each protein molecule can bind up to four molecules of AMP, which act as an allosteric activator to the enzyme. Its function is as follows. Catalyzes the anaerobic formation of alpha-ketobutyrate and ammonia from threonine in a two-step reaction. The first step involved a dehydration of threonine and a production of enamine intermediates (aminocrotonate), which tautomerizes to its imine form (iminobutyrate). Both intermediates are unstable and short-lived. The second step is the nonenzymatic hydrolysis of the enamine/imine intermediates to form 2-ketobutyrate and free ammonia. In the low water environment of the cell, the second step is accelerated by RidA. TdcB also dehydrates serine to yield pyruvate via analogous enamine/imine intermediates. The polypeptide is L-threonine dehydratase catabolic TdcB (tdcB) (Escherichia coli O157:H7).